Reading from the N-terminus, the 310-residue chain is Methionyl-tRNA formyltransferase (310 aa).

111-114 serves as a coordination point for (6S)-5,6,7,8-tetrahydrofolate; that stretch reads SILP.

This sequence belongs to the Fmt family.

The catalysed reaction is L-methionyl-tRNA(fMet) + (6R)-10-formyltetrahydrofolate = N-formyl-L-methionyl-tRNA(fMet) + (6S)-5,6,7,8-tetrahydrofolate + H(+). Attaches a formyl group to the free amino group of methionyl-tRNA(fMet). The formyl group appears to play a dual role in the initiator identity of N-formylmethionyl-tRNA by promoting its recognition by IF2 and preventing the misappropriation of this tRNA by the elongation apparatus. In Methylobacterium sp. (strain 4-46), this protein is Methionyl-tRNA formyltransferase.